The following is a 246-amino-acid chain: Small ribosomal subunit protein uS2 (246 aa).

It belongs to the universal ribosomal protein uS2 family.

This Lachnoclostridium phytofermentans (strain ATCC 700394 / DSM 18823 / ISDg) (Clostridium phytofermentans) protein is Small ribosomal subunit protein uS2.